The following is a 517-amino-acid chain: Putative thymidine phosphorylase (517 aa).

It belongs to the thymidine/pyrimidine-nucleoside phosphorylase family. Type 2 subfamily.

It carries out the reaction thymidine + phosphate = 2-deoxy-alpha-D-ribose 1-phosphate + thymine. This is Putative thymidine phosphorylase from Legionella pneumophila (strain Corby).